The primary structure comprises 277 residues: MSCWTYLGRARGPRASAPTARRFFANFFNDLIVAVSSTVGALKTSQQTPLKMSQDMSHVPEAIRMVLIGPPGAGKGTQAPKLKEKFCVCHLATGDMLRSQVAKQTALGVQAKKIMDQGGLVSDEIMVNMIKDELRSNPECANGFILDGFPRTIPQAQKLDEMLVAQGKPLDRAVELKIDDELLVARITGRLVHPASGRSYHKLFNPPKVAMTDDVTGDPLVQRSDDNADALKKRLDAYHAQTEPIVDFYKKTGIWAGVDASQPPKTVWSDILKALGK.

72-77 (GAGKGT) is an ATP binding site. The interval 92–121 (ATGDMLRSQVAKQTALGVQAKKIMDQGGLV) is NMP. Residues Thr-93, Arg-98, 119 to 121 (GLV), 148 to 151 (GFPR), and Gln-155 each bind AMP. The tract at residues 189–226 (GRLVHPASGRSYHKLFNPPKVAMTDDVTGDPLVQRSDD) is LID. Residues Arg-190 and 199–200 (SY) each bind ATP. Residues Arg-223 and Arg-234 each contribute to the AMP site. Gln-262 is an ATP binding site.

It belongs to the adenylate kinase family. AK2 subfamily. In terms of assembly, monomer.

The protein resides in the cytoplasm. It is found in the cytosol. It localises to the mitochondrion intermembrane space. It catalyses the reaction AMP + ATP = 2 ADP. In terms of biological role, catalyzes the reversible transfer of the terminal phosphate group between ATP and AMP. Plays an important role in cellular energy homeostasis and in adenine nucleotide metabolism. Adenylate kinase activity is critical for regulation of the phosphate utilization and the AMP de novo biosynthesis pathways. This chain is Adenylate kinase, found in Eremothecium gossypii (strain ATCC 10895 / CBS 109.51 / FGSC 9923 / NRRL Y-1056) (Yeast).